The sequence spans 242 residues: uncharacterized protein (242 aa).

The region spanning 3 to 116 is the Response regulatory domain; that stretch reads TALVIDDEPF…RLRKTVKRLS (114 aa). Asp-54 carries the 4-aspartylphosphate modification. Residues 139–240 form the HTH LytTR-type domain; sequence IPCIGHNRIV…LKLLKEMLGL (102 aa).

This is an uncharacterized protein from Vibrio vulnificus (strain CMCP6).